The following is a 217-amino-acid chain: 3-isopropylmalate dehydratase small subunit (217 aa).

The protein belongs to the LeuD family. LeuD type 1 subfamily. As to quaternary structure, heterodimer of LeuC and LeuD.

It carries out the reaction (2R,3S)-3-isopropylmalate = (2S)-2-isopropylmalate. Its pathway is amino-acid biosynthesis; L-leucine biosynthesis; L-leucine from 3-methyl-2-oxobutanoate: step 2/4. Catalyzes the isomerization between 2-isopropylmalate and 3-isopropylmalate, via the formation of 2-isopropylmaleate. The protein is 3-isopropylmalate dehydratase small subunit of Delftia acidovorans (strain DSM 14801 / SPH-1).